A 250-amino-acid polypeptide reads, in one-letter code: ATP synthase subunit a (250 aa).

The next 6 membrane-spanning stretches (helical) occupy residues 26-46, 84-104, 114-134, 143-163, 193-213, and 216-236; these read FTNA…FLYL, FFPM…LGMF, IIVT…YGFY, LFVP…IEVI, FVAS…LPLI, and VALT…FAVL.

Belongs to the ATPase A chain family. F-type ATPases have 2 components, CF(1) - the catalytic core - and CF(0) - the membrane proton channel. CF(1) has five subunits: alpha(3), beta(3), gamma(1), delta(1), epsilon(1). CF(0) has three main subunits: a(1), b(2) and c(9-12). The alpha and beta chains form an alternating ring which encloses part of the gamma chain. CF(1) is attached to CF(0) by a central stalk formed by the gamma and epsilon chains, while a peripheral stalk is formed by the delta and b chains.

Its subcellular location is the cell inner membrane. Key component of the proton channel; it plays a direct role in the translocation of protons across the membrane. This is ATP synthase subunit a from Sinorhizobium fredii (strain NBRC 101917 / NGR234).